A 434-amino-acid polypeptide reads, in one-letter code: Glutamyl-tRNA reductase (434 aa).

Substrate contacts are provided by residues 49–52 (TCNR), Ser109, 114–116 (EPQ), and Gln120. The active-site Nucleophile is Cys50. 189-194 (GAGEMA) is a binding site for NADP(+).

The protein belongs to the glutamyl-tRNA reductase family. Homodimer.

The catalysed reaction is (S)-4-amino-5-oxopentanoate + tRNA(Glu) + NADP(+) = L-glutamyl-tRNA(Glu) + NADPH + H(+). The protein operates within porphyrin-containing compound metabolism; protoporphyrin-IX biosynthesis; 5-aminolevulinate from L-glutamyl-tRNA(Glu): step 1/2. Functionally, catalyzes the NADPH-dependent reduction of glutamyl-tRNA(Glu) to glutamate 1-semialdehyde (GSA). The protein is Glutamyl-tRNA reductase of Desulfatibacillum aliphaticivorans.